Consider the following 585-residue polypeptide: Aspartate--tRNA ligase (585 aa).

Residue Glu-173 coordinates L-aspartate. The interval 197-200 is aspartate; it reads QTLK. Arg-219 serves as a coordination point for L-aspartate. Residues 219–221 and Gln-228 each bind ATP; that span reads RDE. His-446 is a binding site for L-aspartate. Glu-480 contributes to the ATP binding site. L-aspartate is bound at residue Arg-487. 532-535 contacts ATP; sequence GLDR.

This sequence belongs to the class-II aminoacyl-tRNA synthetase family. Type 1 subfamily. In terms of assembly, homodimer.

It localises to the cytoplasm. It carries out the reaction tRNA(Asp) + L-aspartate + ATP = L-aspartyl-tRNA(Asp) + AMP + diphosphate. Catalyzes the attachment of L-aspartate to tRNA(Asp) in a two-step reaction: L-aspartate is first activated by ATP to form Asp-AMP and then transferred to the acceptor end of tRNA(Asp). The sequence is that of Aspartate--tRNA ligase from Parabacteroides distasonis (strain ATCC 8503 / DSM 20701 / CIP 104284 / JCM 5825 / NCTC 11152).